The primary structure comprises 113 residues: Hydrogenase maturation factor HybF (113 aa).

2 residues coordinate Ni(2+): histidine 2 and glutamate 3. Residues cysteine 73, cysteine 76, cysteine 89, and cysteine 92 each coordinate Zn(2+).

Belongs to the HypA/HybF family. HybF subfamily.

Functionally, involved in the maturation of [NiFe] hydrogenases. Required for nickel insertion into the metal center of the hydrogenase. The sequence is that of Hydrogenase maturation factor HybF from Morganella morganii (Proteus morganii).